A 459-amino-acid polypeptide reads, in one-letter code: DnaJ protein homolog XDJ1 (459 aa).

The J domain maps to 7-79 (GDRLYDVLGV…KSHYDLYGDD (73 aa)). A CR-type zinc finger spans residues 146 to 240 (GKKLKFDLKR…CAGLGLLSKK (95 aa)). 4 CXXCXGXG motif repeats span residues 159-166 (CIKCHGSG), 181-188 (CESCAGKG), 208-215 (CEKCNGKG), and 228-235 (CPDCAGLG).

The protein localises to the mitochondrion outer membrane. This is DnaJ protein homolog XDJ1 (XDJ1) from Saccharomyces cerevisiae (strain ATCC 204508 / S288c) (Baker's yeast).